We begin with the raw amino-acid sequence, 501 residues long: Aldehyde dehydrogenase 1A1 (501 aa).

Residue Ser-2 is modified to N-acetylserine. N6-acetyllysine is present on residues Lys-91 and Lys-128. NAD(+) is bound by residues 167–170, 193–196, 226–227, and 246–247; these read IPWN, KPAE, GP, and GS. Lys-252 carries the N6-acetyllysine modification. Glu-269 functions as the Proton acceptor in the catalytic mechanism. 269-271 lines the NAD(+) pocket; that stretch reads ELG. Cys-303 functions as the Nucleophile in the catalytic mechanism. The segment at 336 to 501 is mediates interaction with PRMT3; the sequence is LTPGVTQGPQ…VTVKISQKNS (166 aa). Thr-337 is modified (phosphothreonine). 349–353 contributes to the NAD(+) binding site; that stretch reads EQYDK. Lys-353 and Lys-367 each carry N6-acetyllysine. 400 to 402 is an NAD(+) binding site; that stretch reads EIF. An N6-acetyllysine modification is found at Lys-410. Ser-413 is subject to Phosphoserine. An N6-acetyllysine mark is found at Lys-419, Lys-435, and Lys-495.

It belongs to the aldehyde dehydrogenase family. As to quaternary structure, homotetramer. Interacts with PRMT3; the interaction is direct, inhibits ALDH1A1 aldehyde dehydrogenase activity and is independent of the methyltransferase activity of PRMT3. In terms of processing, the N-terminus is blocked most probably by acetylation. Expressed by erythrocytes (at protein level).

The protein localises to the cytoplasm. It is found in the cytosol. Its subcellular location is the cell projection. It localises to the axon. The catalysed reaction is an aldehyde + NAD(+) + H2O = a carboxylate + NADH + 2 H(+). It catalyses the reaction all-trans-retinal + NAD(+) + H2O = all-trans-retinoate + NADH + 2 H(+). The enzyme catalyses 9-cis-retinal + NAD(+) + H2O = 9-cis-retinoate + NADH + 2 H(+). It carries out the reaction 11-cis-retinal + NAD(+) + H2O = 11-cis-retinoate + NADH + 2 H(+). The catalysed reaction is 13-cis-retinal + NAD(+) + H2O = 13-cis-retinoate + NADH + 2 H(+). It catalyses the reaction 3-deoxyglucosone + NAD(+) + H2O = 2-dehydro-3-deoxy-D-gluconate + NADH + 2 H(+). The enzyme catalyses (E)-4-hydroxynon-2-enal + NAD(+) + H2O = (E)-4-hydroxynon-2-enoate + NADH + 2 H(+). It carries out the reaction malonaldehyde + NAD(+) + H2O = 3-oxopropanoate + NADH + 2 H(+). The catalysed reaction is hexanal + NAD(+) + H2O = hexanoate + NADH + 2 H(+). It catalyses the reaction propanal + NAD(+) + H2O = propanoate + NADH + 2 H(+). The enzyme catalyses acetaldehyde + NAD(+) + H2O = acetate + NADH + 2 H(+). It carries out the reaction benzaldehyde + NAD(+) + H2O = benzoate + NADH + 2 H(+). The catalysed reaction is 4-aminobutanal + NAD(+) + H2O = 4-aminobutanoate + NADH + 2 H(+). It functions in the pathway cofactor metabolism; retinol metabolism. With respect to regulation, inhibited by citral, disulfiram, and cyanamide. Activated by diethylstilbestrol. Inhibited by duocarmycin analogs. Cytosolic dehydrogenase that catalyzes the irreversible oxidation of a wide range of aldehydes to their corresponding carboxylic acid. Functions downstream of retinol dehydrogenases and catalyzes the oxidation of retinaldehyde into retinoic acid, the second step in the oxidation of retinol/vitamin A into retinoic acid. This pathway is crucial to control the levels of retinol and retinoic acid, two important molecules which excess can be teratogenic and cytotoxic. Also oxidizes aldehydes resulting from lipid peroxidation like (E)-4-hydroxynon-2-enal/HNE, malonaldehyde and hexanal that form protein adducts and are highly cytotoxic. By participating for instance to the clearance of (E)-4-hydroxynon-2-enal/HNE in the lens epithelium prevents the formation of HNE-protein adducts and lens opacification. Also functions downstream of fructosamine-3-kinase in the fructosamine degradation pathway by catalyzing the oxidation of 3-deoxyglucosone, the carbohydrate product of fructosamine 3-phosphate decomposition, which is itself a potent glycating agent that may react with lysine and arginine side-chains of proteins. Also has an aminobutyraldehyde dehydrogenase activity and is probably part of an alternative pathway for the biosynthesis of GABA/4-aminobutanoate in midbrain, thereby playing a role in GABAergic synaptic transmission. In Homo sapiens (Human), this protein is Aldehyde dehydrogenase 1A1.